We begin with the raw amino-acid sequence, 340 residues long: Anthranilate phosphoribosyltransferase (340 aa).

5-phospho-alpha-D-ribose 1-diphosphate is bound by residues Gly-80, 83–84, Thr-88, 90–93, 108–116, and Ser-120; these read GD, NIST, and KHGNRAMSS. Gly-80 contributes to the anthranilate binding site. Ser-92 serves as a coordination point for Mg(2+). Anthranilate is bound at residue Asn-111. Position 166 (Arg-166) interacts with anthranilate. The Mg(2+) site is built by Asp-225 and Glu-226.

This sequence belongs to the anthranilate phosphoribosyltransferase family. In terms of assembly, homodimer. Mg(2+) serves as cofactor.

The catalysed reaction is N-(5-phospho-beta-D-ribosyl)anthranilate + diphosphate = 5-phospho-alpha-D-ribose 1-diphosphate + anthranilate. It participates in amino-acid biosynthesis; L-tryptophan biosynthesis; L-tryptophan from chorismate: step 2/5. In terms of biological role, catalyzes the transfer of the phosphoribosyl group of 5-phosphorylribose-1-pyrophosphate (PRPP) to anthranilate to yield N-(5'-phosphoribosyl)-anthranilate (PRA). In Roseiflexus castenholzii (strain DSM 13941 / HLO8), this protein is Anthranilate phosphoribosyltransferase.